We begin with the raw amino-acid sequence, 211 residues long: Large ribosomal subunit protein uL3 (211 aa).

The protein belongs to the universal ribosomal protein uL3 family. As to quaternary structure, part of the 50S ribosomal subunit. Forms a cluster with proteins L14 and L19.

Its function is as follows. One of the primary rRNA binding proteins, it binds directly near the 3'-end of the 23S rRNA, where it nucleates assembly of the 50S subunit. The sequence is that of Large ribosomal subunit protein uL3 from Geotalea daltonii (strain DSM 22248 / JCM 15807 / FRC-32) (Geobacter daltonii).